The primary structure comprises 272 residues: Phytolongin Phyl2.2 (272 aa).

The region spanning 12–116 (CIAKGTVVLA…LINPVSHCLQ (105 aa)) is the Longin domain. The helical; Anchor for type IV membrane protein transmembrane segment at 243–263 (WVVLMFDFCICAVLFGIWLWI) threads the bilayer.

The protein belongs to the synaptobrevin family.

Its subcellular location is the membrane. Its function is as follows. Non-SNARE longin protein involved in membrane-trafficking machinery. The protein is Phytolongin Phyl2.2 of Arabidopsis thaliana (Mouse-ear cress).